Here is a 421-residue protein sequence, read N- to C-terminus: Acetylglutamate kinase (421 aa).

The interval 1 to 252 (MASAKEISQY…PLESSVSITR (252 aa)) is acetylglutamate kinase. Substrate-binding positions include 59-60 (AG), Arg81, and Asn170. The N-acetyltransferase domain occupies 274-420 (ERVIRATTWK…HCTQHPPTLI (147 aa)).

It in the N-terminal section; belongs to the acetylglutamate kinase family. ArgB subfamily.

The protein localises to the cytoplasm. The enzyme catalyses N-acetyl-L-glutamate + ATP = N-acetyl-L-glutamyl 5-phosphate + ADP. The protein operates within amino-acid biosynthesis; L-arginine biosynthesis; N(2)-acetyl-L-ornithine from L-glutamate: step 2/4. The protein is Acetylglutamate kinase (argB) of Xylella fastidiosa (strain Temecula1 / ATCC 700964).